We begin with the raw amino-acid sequence, 221 residues long: GTP-binding nuclear protein Ran-1 (221 aa).

The Small GTPase Ran-type domain maps to 10-174; that stretch reads DYPSFKLVIV…LYLARKLAGD (165 aa). 21 to 28 contacts GTP; the sequence is DGGTGKTT. A switch-I region spans residues 40-48; sequence KKYEPTIGV. GTP contacts are provided by residues glycine 71, 125–128, and 153–155; these read NKVD and SAK. The segment at 71 to 87 is switch-II; it reads GQEKFGGLRDGYYIHGQ.

The protein belongs to the small GTPase superfamily. Ran family. Found in a nuclear export complex with RanGTP, exportin and pre-miRNA. Interacts with RANBP1A and RANBP1B. Interacts with TRN1. Interacts with ATX1. Interacts with KPNB1. Binds to XPO1. Interacts with MOS14. Binds to NTF2B.

The protein localises to the nucleus. In terms of biological role, GTP-binding protein involved in nucleocytoplasmic transport. Required for the import of protein into the nucleus and also for RNA export. Involved in chromatin condensation and control of cell cycle. The sequence is that of GTP-binding nuclear protein Ran-1 (RAN1) from Arabidopsis thaliana (Mouse-ear cress).